A 57-amino-acid polypeptide reads, in one-letter code: Small ribosomal subunit protein bS21 (57 aa).

Residues 31 to 57 (EVRKRKHYEKPSVRRKKKSEAARKRKF) form a disordered region. Residues 33–57 (RKRKHYEKPSVRRKKKSEAARKRKF) show a composition bias toward basic residues.

The protein belongs to the bacterial ribosomal protein bS21 family.

The sequence is that of Small ribosomal subunit protein bS21 (rpsU) from Halalkalibacterium halodurans (strain ATCC BAA-125 / DSM 18197 / FERM 7344 / JCM 9153 / C-125) (Bacillus halodurans).